Reading from the N-terminus, the 837-residue chain is Vacuolar membrane protease (837 aa).

Residues 1–36 (MSEEEVHDTSSEASEVFTNQPNAFVRGVRSIFGYRK) are Cytoplasmic-facing. A helical membrane pass occupies residues 37 to 57 (TSLTLFVILTIVVTAGLSFYD). Residues 58 to 355 (NSLELTIELP…FATPISALAR (298 aa)) lie on the Vacuolar side of the membrane. N143 carries an N-linked (GlcNAc...) asparagine glycan. Zn(2+) contacts are provided by H157 and D169. Catalysis depends on E201, which acts as the Proton acceptor. 3 residues coordinate Zn(2+): E202, E227, and H299. A helical membrane pass occupies residues 356–376 (VNLVLLVLFPVVSTPLLFVIV). Over 377 to 384 (KYKKWKLR) the chain is Cytoplasmic. Residues 385–405 (VTNFLGVPLAMGLAVAVGQVG) traverse the membrane as a helical segment. The Vacuolar segment spans residues 406 to 415 (NPMLVSSHPM). A helical transmembrane segment spans residues 416–436 (MVVATTTSIVVLVYYVVLNGV). The Cytoplasmic segment spans residues 437-446 (DWVNTSSDQK). The chain crosses the membrane as a helical span at residues 447 to 467 (LVTMIEVSFVYWVVLVYVTWS). At 468 to 474 (GGDHTGE) the chain is on the vacuolar side. Residues 475–495 (FGVTVLFFVQASTSLLGLIGW) form a helical membrane-spanning segment. Over 496–539 (TFTRVRGGDEPLLSGEEERYGTEDERDTEKPLVEHNYDWSLQYL) the chain is Cytoplasmic. Residues 540-560 (LIVPVSSLVVYNSGWLVLEGV) form a helical membrane-spanning segment. N-linked (GlcNAc...) asparagine glycosylation occurs at N561. Residues 561 to 572 (NKTVQESLASEH) lie on the Vacuolar side of the membrane. Residues 573-593 (LIYWIVVVFSQFLVLPVVPFI) traverse the membrane as a helical segment. Over 594 to 598 (TKFNR) the chain is Cytoplasmic. The chain crosses the membrane as a helical span at residues 599–619 (YIVLGLSVVVVVGVLMSMAVH). The Vacuolar portion of the chain corresponds to 620–837 (PFNQGSPMKL…LVGVVKHVDV (218 aa)). The N-linked (GlcNAc...) asparagine glycan is linked to N689.

Belongs to the peptidase M28 family. The cofactor is Zn(2+).

It is found in the vacuole membrane. May be involved in vacuolar sorting and osmoregulation. The polypeptide is Vacuolar membrane protease (Candida albicans (strain SC5314 / ATCC MYA-2876) (Yeast)).